A 547-amino-acid polypeptide reads, in one-letter code: Chaperonin GroEL 2 (547 aa).

Residues T30–P33, K51, D87–T91, G415, and D496 contribute to the ATP site.

Belongs to the chaperonin (HSP60) family. Forms a cylinder of 14 subunits composed of two heptameric rings stacked back-to-back. Interacts with the co-chaperonin GroES.

It is found in the cytoplasm. It carries out the reaction ATP + H2O + a folded polypeptide = ADP + phosphate + an unfolded polypeptide.. Its function is as follows. Together with its co-chaperonin GroES, plays an essential role in assisting protein folding. The GroEL-GroES system forms a nano-cage that allows encapsulation of the non-native substrate proteins and provides a physical environment optimized to promote and accelerate protein folding. The sequence is that of Chaperonin GroEL 2 from Rhodopseudomonas palustris (strain ATCC BAA-98 / CGA009).